The primary structure comprises 304 residues: Protein BOBBER 1 (304 aa).

Ala-2 is subject to N-acetylalanine. Residues 54–106 (EDEIVVAVRAAKEKLKKAEKKKAEKESVKPVEKKAEKEIVKLVEKKVEKESVK) adopt a coiled-coil conformation. The segment at 111–141 (ASSAEPIEVEKPKEEEEKKESGPIVPNKGNG) is disordered. The segment covering 118–131 (EVEKPKEEEEKKES) has biased composition (basic and acidic residues). Positions 142–231 (TDLENYSWIQ…DQMEWWKCCV (90 aa)) constitute a CS domain.

In terms of tissue distribution, expressed in all seedling tissues with highest expression levels at the root tip.

Its subcellular location is the cytoplasm. It localises to the cytoplasmic granule. Small heat shock protein required for the establishment of auxin gradients and for patterning of the apical domain of the embryo. Involved in the specification of the cotyledon primordia. Also required for normal inflorescence and floral meristem function, normal developmental patterning and thermotolerance. Acts as a molecular chaperone. The protein is Protein BOBBER 1 (BOB1) of Arabidopsis thaliana (Mouse-ear cress).